A 198-amino-acid polypeptide reads, in one-letter code: MSYYAFEGLIPVVHPDAFVHPSAVLIGDVIVGAGVYIGPLASLRGDYGRQILEAGSNLQDGCIMHGYCDTDTIVHENGHIGHGAILHGCVVGRDALVGMNSVIMDGAVIGEESIVAAMSFVKAGFQGEARQLLVGSPARVLRQVTDQELHWKRLNTKEYQDLAIRCRTGLSETKPLTQVEENRPRLKGTTDVKPKSAQ.

Residues 179–198 (VEENRPRLKGTTDVKPKSAQ) are disordered. The span at 180–198 (EENRPRLKGTTDVKPKSAQ) shows a compositional bias: basic and acidic residues.

It belongs to the transferase hexapeptide repeat family.

It functions in the pathway amine and polyamine metabolism; carnitine metabolism. In terms of biological role, overproduction of CaiE stimulates the activity of CaiB and CaiD. The protein is Carnitine operon protein CaiE of Salmonella choleraesuis (strain SC-B67).